A 161-amino-acid chain; its full sequence is Nucleotide-binding protein swp_1151 (161 aa).

This sequence belongs to the YajQ family.

Nucleotide-binding protein. The chain is Nucleotide-binding protein swp_1151 from Shewanella piezotolerans (strain WP3 / JCM 13877).